A 508-amino-acid chain; its full sequence is Cyclic AMP-responsive element-binding protein 5 (508 aa).

Residues 16-40 form a C2H2-type zinc finger; the sequence is FVCSAPGCSQRFPTEDHLMIHRHKH. A Glycyl lysine isopeptide (Lys-Gly) (interchain with G-Cter in SUMO2) cross-link involves residue K50. Residues T59 and T61 each carry the phosphothreonine modification. S137 is modified (phosphoserine). The disordered stretch occupies residues 265-391; that stretch reads RQDQTPHHHM…LERNRAAATR (127 aa). Composition is skewed to basic residues over residues 271–280 and 289–326; these read HHHMHSHPHQ and PYPHQHQHPAHHPHPQPHHQQNHPHHHSHSHLHAHPAH. The segment covering 337–346 has biased composition (polar residues); that stretch reads TGNQAQVSPA. The span at 347–357 shows a compositional bias: low complexity; that stretch reads TQQMQPTQTIQ. Basic and acidic residues predominate over residues 369-386; sequence VVDEDPDERRRKFLERNR. The bZIP domain maps to 375–438; it reads DERRRKFLER…AQLKQLLLTH (64 aa). The basic motif stretch occupies residues 377–397; sequence RRRKFLERNRAAATRCRQKRK. Residues 403–431 form a leucine-zipper region; it reads LEKKAEELTQTNMQLQNEVSMLKNEVAQL. The interval 449–468 is disordered; that stretch reads ESQGYLSPESSPPASPVPAC.

The protein belongs to the bZIP family. As to quaternary structure, binds DNA as a homodimer or as a heterodimer with JUN or ATF2/CREBP1.

The protein localises to the nucleus. Functionally, binds to the cAMP response element and activates transcription. The protein is Cyclic AMP-responsive element-binding protein 5 (CREB5) of Homo sapiens (Human).